Reading from the N-terminus, the 156-residue chain is 6,7-dimethyl-8-ribityllumazine synthase (156 aa).

5-amino-6-(D-ribitylamino)uracil contacts are provided by residues phenylalanine 23, 57–59, and 81–83; these read AYE and AVI. 86 to 87 contributes to the (2S)-2-hydroxy-3-oxobutyl phosphate binding site; that stretch reads ST. Residue histidine 89 is the Proton donor of the active site. Phenylalanine 114 contacts 5-amino-6-(D-ribitylamino)uracil. (2S)-2-hydroxy-3-oxobutyl phosphate is bound at residue arginine 128.

Belongs to the DMRL synthase family.

It carries out the reaction (2S)-2-hydroxy-3-oxobutyl phosphate + 5-amino-6-(D-ribitylamino)uracil = 6,7-dimethyl-8-(1-D-ribityl)lumazine + phosphate + 2 H2O + H(+). It functions in the pathway cofactor biosynthesis; riboflavin biosynthesis; riboflavin from 2-hydroxy-3-oxobutyl phosphate and 5-amino-6-(D-ribitylamino)uracil: step 1/2. Catalyzes the formation of 6,7-dimethyl-8-ribityllumazine by condensation of 5-amino-6-(D-ribitylamino)uracil with 3,4-dihydroxy-2-butanone 4-phosphate. This is the penultimate step in the biosynthesis of riboflavin. The chain is 6,7-dimethyl-8-ribityllumazine synthase from Helicobacter hepaticus (strain ATCC 51449 / 3B1).